The primary structure comprises 424 residues: VNVGCVPKKVMWNTAVHSEFIHDHVDYGFQNCKSKFNWHVIKEKRDAYVSRLNNIYQNNLTKSHIEVIHGYATFRDGPQPTAEVNGKKFTAPHILIATGGVPTVPHENQIPGASLGITSDGFFQLEDLPSRSVIVGAGYIAVEIAGILSALGSKTSLMIRHDKVLRSFDSLISSNCTEELENAGGVEVLTVKKFSQVKEVKKTSSGLELHVVTALPGRKPTVTTIPDVDCLLWAIGRDPNSKGLNLNKLGIQTDDKGHILVDEFQNTNVKGVYAVGDVCGKALLTPVAIAAGRKLAHRLFEGKEDSRLDYDNIPTVVFSHPPIGTVGLTEDEAVHKYGKDNVKIYSTAFTPMYHAVTTRKTKCVMKMVCANKEEKVVGIHMQGIGCDEMLQGFAVAVKMGATKADFDNRVAIHPTSSEELVTLR.

Lysine 8 is a binding site for FAD. Tyrosine 56 provides a ligand contact to glutathione. FAD is bound at residue alanine 72. NADP(+) contacts are provided by alanine 137, isoleucine 140, glutamate 143, arginine 160, arginine 166, and glycine 236. Aspartate 277 is a binding site for FAD. Leucine 283 contacts NADP(+). Residue threonine 285 coordinates FAD. Arginine 293 lines the glutathione pocket. Valine 316 contacts NADP(+). Histidine 413 is an FAD binding site. The active-site Proton acceptor is the histidine 413.

The protein belongs to the class-I pyridine nucleotide-disulfide oxidoreductase family. In terms of assembly, homodimer; disulfide-linked. The cofactor is FAD.

Its subcellular location is the mitochondrion. It localises to the cytoplasm. The enzyme catalyses 2 glutathione + NADP(+) = glutathione disulfide + NADPH + H(+). Its function is as follows. Catalyzes the reduction of glutathione disulfide (GSSG) to reduced glutathione (GSH). Constitutes the major mechanism to maintain a high GSH:GSSG ratio in the cytosol. This is Glutathione reductase (Gsr) from Rattus norvegicus (Rat).